Reading from the N-terminus, the 154-residue chain is uncharacterized protein (154 aa).

This is an uncharacterized protein from Archaeoglobus fulgidus (strain ATCC 49558 / DSM 4304 / JCM 9628 / NBRC 100126 / VC-16).